The following is a 179-amino-acid chain: Large ribosomal subunit protein uL5 (179 aa).

The protein belongs to the universal ribosomal protein uL5 family. Part of the 50S ribosomal subunit; part of the 5S rRNA/L5/L18/L25 subcomplex. Contacts the 5S rRNA and the P site tRNA. Forms a bridge to the 30S subunit in the 70S ribosome.

Functionally, this is one of the proteins that bind and probably mediate the attachment of the 5S RNA into the large ribosomal subunit, where it forms part of the central protuberance. In the 70S ribosome it contacts protein S13 of the 30S subunit (bridge B1b), connecting the 2 subunits; this bridge is implicated in subunit movement. Contacts the P site tRNA; the 5S rRNA and some of its associated proteins might help stabilize positioning of ribosome-bound tRNAs. This Geotalea uraniireducens (strain Rf4) (Geobacter uraniireducens) protein is Large ribosomal subunit protein uL5.